The primary structure comprises 419 residues: MAPILQRISKTFIKPSSPTPESLRCYNLSSSDQMITSVYISLAFFYGSPGCESSRIRQQLDNSLSRTLVYYYPFAGRLVDNDHIDCNDQGVQFVEVRIHCPISAILKQTTSYAEDLVFPRGTSACHEDSLVVVQLNRFECGGVAIAVCISHKVADGSGAIAFINDWAATARVSSHIPSPLLVADSIFPHLDNSLPVPYNLSKNCVTRRFVFPAAEIEKLKSKAVESGLQQPTRVEVVTALLYQCALLASRSTNSGLSRPSVLIQAVNLRPFLVPPLPRNSVGNIFSINFSIIEVDSLEFPELAGRLRKAKLKFQNLSQEKLYYDSQMQELGECLKQLNTGNFDVYYCSSWCRFPVYDVDFGWGKPTWVCTVKSQIKDMIVLMDSPGDEIAAFVTLEEEKMSAFQHNELLLSFASLYSAK.

His151 acts as the Proton acceptor in catalysis. Residues 206–213 carry the Nuclear localization signal motif; that stretch reads TRRFVFPA. Asp359 (proton acceptor) is an active-site residue.

It belongs to the plant acyltransferase family. In terms of assembly, monomer.

Its subcellular location is the cytoplasm. The protein resides in the nucleus. The catalysed reaction is rhazimol + acetyl-CoA = akuammiline + CoA + H(+). It functions in the pathway alkaloid biosynthesis. Its function is as follows. Acyltransferase involved in the biosynthesis of akuammilan monoterpene indole alkaloids (MIAs) natural products, components with various biological properties such as antidiabetic, antibacterial, anti-inflammatory, anticancer, and antimalarial activities. Catalyzes the conversion of rhazimol to akuammiline. The protein is Akuammiline synthase 1 of Alstonia scholaris (Dogbane).